We begin with the raw amino-acid sequence, 306 residues long: Mitochondrial basic amino acids transporter (306 aa).

The next 6 helical transmembrane spans lie at 2-22, 61-81, 96-116, 153-172, 187-207, and 255-275; these read ALDF…GHPF, GLGS…GVQG, FLAG…MELA, GMVS…FLTY, LLVP…WLST, and LLRA…VLTY. Solcar repeat units follow at residues 2–86, 90–178, and 190–275; these read ALDF…TLRA, DSPL…MTRA, and PKLL…VLTY. Residues 284-306 are disordered; sequence DSEAALGTSPTPAGSALAQPSSL. Polar residues predominate over residues 291-306; that stretch reads TSPTPAGSALAQPSSL.

Belongs to the mitochondrial carrier (TC 2.A.29) family. As to expression, widely expressed, with highest levels in the brain, including cortex, cerebellum, hippocampus and hypothalamus, and moderate levels in liver, kidney, heart and testis.

It localises to the mitochondrion inner membrane. The catalysed reaction is L-lysine(out) + L-arginine(in) = L-lysine(in) + L-arginine(out). It catalyses the reaction L-histidine(out) + L-arginine(in) = L-histidine(in) + L-arginine(out). It carries out the reaction L-ornithine(in) + L-arginine(out) = L-ornithine(out) + L-arginine(in). The enzyme catalyses L-homoarginine(in) + L-arginine(out) = L-homoarginine(out) + L-arginine(in). The catalysed reaction is N(omega)-methyl-L-arginine(in) + L-arginine(out) = N(omega)-methyl-L-arginine(out) + L-arginine(in). It catalyses the reaction L-arginine(in) = L-arginine(out). It carries out the reaction L-lysine(in) = L-lysine(out). The enzyme catalyses L-ornithine(in) = L-ornithine(out). The catalysed reaction is L-histidine(out) = L-histidine(in). Functionally, mitochondrial transporter of arginine, lysine, homoarginine, methylarginine. Transports with a much lesser extent, ornithine and histidine. Does not transport carnitine nor acylcarnitines. Functions by both counter-exchange and uniport mechanisms. Plays a physiological role in the import of basic amino acids into mitochondria for mitochondrial protein synthesis and amino acid degradation. This chain is Mitochondrial basic amino acids transporter (Slc25a29), found in Mus musculus (Mouse).